A 502-amino-acid chain; its full sequence is Interleukin-17 receptor B (502 aa).

A signal peptide spans 1–17 (MSLVLLSLAALCRSAVP). Residues 18-292 (REPTVQCGSE…NKSKPGGWLP (275 aa)) are Extracellular-facing. N-linked (GlcNAc...) asparagine glycans are attached at residues N67, N103, N156, N183, N197, and N283. Residues 293–313 (LLLLSLLVATWVLVAGIYLMW) form a helical membrane-spanning segment. Residues 314-502 (RHERIKKTSF…QACHDGCCSL (189 aa)) lie on the Cytoplasmic side of the membrane. The SEFIR domain maps to 331-477 (PIKVLVVYPS…LMKDATAFCA (147 aa)).

In terms of assembly, interacts with DAZAP2. Interacts with TRAF3IP2. Expressed in several endocrine tissues, mostly in fetal and adult liver, kidney, pancreas, testis, colon, brain and small intestine; not detected in peripheral blood leukocytes, lymphoid organs, and most cell lines.

It localises to the cell membrane. The protein localises to the secreted. Functionally, receptor for the pro-inflammatory cytokines IL17B and IL17E. May play a role in controlling the growth and/or differentiation of hematopoietic cells. This Homo sapiens (Human) protein is Interleukin-17 receptor B (IL17RB).